Consider the following 334-residue polypeptide: Cathepsin L2 (334 aa).

An N-terminal signal peptide occupies residues 1–17; it reads MNLSLVLAAFCLGIASA. Residues 18 to 113 constitute a propeptide, activation peptide; the sequence is VPKFDQNLDT…KVFREPLFLD (96 aa). 2 disulfide bridges follow: Cys135-Cys178 and Cys169-Cys211. Residue Cys138 is part of the active site. N-linked (GlcNAc...) asparagine glycosylation occurs at Asn221. Cys270 and Cys323 are oxidised to a cystine. His277 is an active-site residue. Asn292 carries an N-linked (GlcNAc...) asparagine glycan. Asn301 is a catalytic residue.

The protein belongs to the peptidase C1 family. In terms of tissue distribution, predominantly expressed in the thymus and testis. Also expressed in corneal epithelium, and to a lesser extent in conjunctival epithelium and skin.

It localises to the lysosome. The enzyme catalyses The recombinant enzyme hydrolyzes proteins (serum albumin, collagen) and synthetic substrates (Z-Phe-Arg-NHMec &gt; Z-Leu-Arg-NHMec &gt; Z-Val-Arg-NHMec).. Inhibited by CST6. Cysteine protease. May have an important role in corneal physiology. This Homo sapiens (Human) protein is Cathepsin L2 (CTSV).